Consider the following 1486-residue polypeptide: MISRWLLLIGLLALALFSQPCATEKAEPQINSTPFDHEPFFMSYFEDSDTILMLTTQRNLFRSFDGGKGWERVDDMDGKMKQHVVSVLQHPSDKDKAYALGSKGRHWITTDRAKTWNAFTIHQSPAIQHEPLVFHGWDSGKVIFQTDECIGTFCIVKSYYTTDDFKTVSPLRVSAGGCAWAVGHPQFAEGLNLEDQIRNRVLCVVSGLKVPAPYANRLVYSDDFFSNEADGAEMNLHQGRPVSGVQTTAAVKKFLVAAVKSQGTDEMALYVTLDTKVWHRADFGGHRVEQDAYTVLESTNYSMQVDVLTDQSSMTGVLFTSNSNGTYFTRNVEHTNRDRFGHVDFEKIADIQGIVLVNTVSNWKKLESDHRKKIVSEVSFDDGRTFQPLTVGDKHLHLHSVTTYANTGRVFSSPAPGVVMGVGNKGDHLKEYSECDLYVSDDAGVTWRHALDGPFKYEFGDQGAIIMAVSDKGKIGEIKYSTDHGKEWHTAKLQHEIFPKMLTTTPDSTSMKFVLVGSKESTGDGFFVYSIDFGSLHGRKCEKDDFEKWPARLNEDGEPDCLMGHKQFFNRRKANADCFMDEEFKDPQPIFEPCKCTAEDYECDYNFVRSEDGKSCLPAAPLVPPAGKCREKTDKFYGPSGWRLIPGNNCIREGGENLDKDIERTCEDTNGSPETHMSHKQVFDNSKQFSGQYFYLERQASSSGNDETVLMLTREREFWVSHDHGKKWEQPLKGVQIVAIIPHPYYSDGAFLLTGGQEAFWTVDRAYTFKSFKVPIPPTRDDMPVFSFHPQYKDWLIWTGAVDCGHGDCHSDAYITKNRGKDWDLLLRYVGKCEFESRKNRPDSENLIFCEQYANENKNNHKQLLSSDSFFADSHVHFDNEARYATMSEYIIVASHDPNNANSLIASVSVDGKTFAEAKFPPNVDVPVKTAFTVLDSSTHAVFLHLTMGVLKGAEYGSIIKSNSNGTLYTVSLNAASRDDRGFVDYEKMQGLEGVAVANVISNVDTVLKKGAAAKKVKTKITHNDGGQWMLLPPPAKDAEGKDFGCSNKDGKASDKCSLHLHGYTERWDSRDTFSSGSAIGLMMGVGNVGDHLTSKEEADTFMTRDGGITWKPIKKGRYIWEYGDSGSVIVIVPESRPTKILHYSLDEGDSWENFKFSDVDMLIHRLSTLPSDTSKNFLLWGKEQDSNQLATVNVDFSSLREASCKLVEDGQDSDDYYLWEPKHPLQEDNCLFGHIEQYHRKKLAANCWNNWREPHVHSIGKNCTCTRADYECDYNYEPQSDGSCALVPGLPKPDASIVCKEDPDKIEYPELLLGYRRIPQTTCMGGWEPPVVFKPCPGKEKEYKKKHSISGIGLFFAIVTPIAMASAAGYYVYTRWDGKFGQIRLGEDIGGREAILSRDSPLVAVPIAIIAGVVAVLKALPLLAISLWRSSSSFIRTRRDRAYSRPYASRGSFAARRGDYTSVVDDEDELLGVEDGEAEGEEEEL.

An N-terminal signal peptide occupies residues 1–23 (MISRWLLLIGLLALALFSQPCAT). The Lumenal portion of the chain corresponds to 24-1349 (EKAEPQINST…KEKEYKKKHS (1326 aa)). A BNR 1 repeat occupies 61–71 (FRSFDGGKGWE). Residues N300 and N324 are each glycosylated (N-linked (GlcNAc...) asparagine). 4 BNR repeats span residues 378 to 387 (VSFDDGRTFQ), 438 to 448 (YVSDDAGVTWR), 480 to 489 (YSTDHGKEWH), and 719 to 729 (WVSHDHGKKWE). N965 carries an N-linked (GlcNAc...) asparagine glycan. 2 BNR repeats span residues 1102–1112 (FMTRDGGITWK) and 1144–1153 (YSLDEGDSWE). N1263 is a glycosylation site (N-linked (GlcNAc...) asparagine). A helical membrane pass occupies residues 1350–1370 (ISGIGLFFAIVTPIAMASAAG). At 1371–1405 (YYVYTRWDGKFGQIRLGEDIGGREAILSRDSPLVA) the chain is on the cytoplasmic side. Residues 1406 to 1426 (VPIAIIAGVVAVLKALPLLAI) form a helical membrane-spanning segment. The Lumenal segment spans residues 1427–1486 (SLWRSSSSFIRTRRDRAYSRPYASRGSFAARRGDYTSVVDDEDELLGVEDGEAEGEEEEL).

Belongs to the VPS10-related sortilin family.

It is found in the golgi apparatus. It localises to the trans-Golgi network membrane. Its subcellular location is the prevacuolar compartment membrane. In terms of biological role, functions as a sorting receptor in the Golgi compartment required for the intracellular sorting and delivery of soluble vacuolar proteins, like carboxypeptidase Y (CPY) and proteinase A. Executes multiple rounds of sorting by cycling between the late Golgi and a prevacuolar endosome-like compartment. The chain is Vacuolar protein sorting/targeting protein 10 (vps10) from Aspergillus clavatus (strain ATCC 1007 / CBS 513.65 / DSM 816 / NCTC 3887 / NRRL 1 / QM 1276 / 107).